The primary structure comprises 379 residues: Endonuclease III homolog 1, chloroplastic (379 aa).

The N-terminal 54 residues, 1–54 (MILLVNGGAATSIHPNAARFYRIGTMSRQIHGAVSSSKHISLKTQHPLSDSNSE), are a transit peptide targeting the chloroplast. Residues 244 to 272 (KYDGDIPSSLDDLLSLPGIGPKMAHLILH) enclose the HhH domain. The Nucleophile; for N-glycosylase activity role is filled by Lys-265. Residues Cys-340, Cys-347, Cys-350, and Cys-356 each contribute to the [4Fe-4S] cluster site.

It belongs to the Nth/MutY family. [4Fe-4S] cluster serves as cofactor. As to expression, expressed at low levels in roots, stems, leaves and flowers.

It is found in the plastid. It localises to the chloroplast stroma. The protein resides in the chloroplast nucleoid. The enzyme catalyses 2'-deoxyribonucleotide-(2'-deoxyribose 5'-phosphate)-2'-deoxyribonucleotide-DNA = a 3'-end 2'-deoxyribonucleotide-(2,3-dehydro-2,3-deoxyribose 5'-phosphate)-DNA + a 5'-end 5'-phospho-2'-deoxyribonucleoside-DNA + H(+). Its function is as follows. Bifunctional DNA N-glycosylase with associated apurinic/apyrimidinic (AP) lyase function that catalyzes the first step in base excision repair (BER), the primary repair pathway for the repair of oxidative DNA damage. The DNA N-glycosylase activity releases the damaged DNA base from DNA by cleaving the N-glycosidic bond, leaving an AP site. The AP lyase activity cleaves the phosphodiester bond 3' to the AP site by a beta-elimination. Primarily recognizes and repairs oxidative base damage of pyrimidines. This chain is Endonuclease III homolog 1, chloroplastic, found in Arabidopsis thaliana (Mouse-ear cress).